Here is a 3004-residue protein sequence, read N- to C-terminus: Guanylate cyclase beta (3004 aa).

The Cytoplasmic segment spans residues 1–66 (MKETDKIKSE…FSLYNFIRRL (66 aa)). A helical membrane pass occupies residues 67-87 (ISLDAVIVYTLFMTVYIFSEI). Residues 88 to 94 (SQGITKK) lie on the Extracellular side of the membrane. Residues 95 to 115 (YLFVDTAISLFLNIGILVVIE) form a helical membrane-spanning segment. The Cytoplasmic segment spans residues 116 to 300 (SLFELKLLKD…TFCIKMNNVV (185 aa)). The helical transmembrane segment at 301-321 (YYLIFMYILFVLLSIIIKAIF) threads the bilayer. Over 322–334 (YRKGKLLENSNDT) the chain is Extracellular. Asn332 carries an N-linked (GlcNAc...) asparagine glycan. A helical membrane pass occupies residues 335-355 (FFTVLEDFIGLYILVLPVMLY). Over 356–991 (SEKSLIYIIQ…GRLNRFSLCR (636 aa)) the chain is Cytoplasmic. A helical membrane pass occupies residues 992 to 1012 (AFLWIIYLKVMIGSFYFFHNF). The Extracellular segment spans residues 1013–1022 (DNFFSGSSIS). A helical membrane pass occupies residues 1023–1043 (SILYSQTAFAIFHYSLIVAFA). The Cytoplasmic portion of the chain corresponds to 1044 to 1072 (SYEIDIPYKFIRNFPYIYQLARRKYFLNN). The helical transmembrane segment at 1073-1093 (TIIFLNIVESIFSSFISYYIL) threads the bilayer. Residues 1094 to 1105 (RGNLFNLITHRK) lie on the Extracellular side of the membrane. A helical membrane pass occupies residues 1106 to 1126 (FTFHIFVLNFFLISEKILLFS). The Cytoplasmic portion of the chain corresponds to 1127–1130 (KTWH). A helical transmembrane segment spans residues 1131–1151 (IFFFIMTIIIVSILFIYINIY). Residues 1152–1171 (TLVDCLITGKCEFSLFDPED) lie on the Extracellular side of the membrane. A helical transmembrane segment spans residues 1172 to 1192 (SYFWISLLPILYINFIIDKFM). Residues 1193-1297 (KFVKNKIYPD…YEKRNKLKLR (105 aa)) lie on the Cytoplasmic side of the membrane. Residues 1298 to 1318 (IIILLLFIIFLITFTIQIIIS) traverse the membrane as a helical segment. At 1319 to 1327 (KFIEKKLHS) the chain is on the extracellular side. Residues 1328-1348 (LSYLTVIYYIVAVLYLIKILI) form a helical membrane-spanning segment. Residues 1349 to 1353 (RNKTN) are Cytoplasmic-facing. Residues 1354–1374 (YTYFYIIGKLLLVIGYLLEIS) form a helical membrane-spanning segment. Topologically, residues 1375–1394 (ENSVNNIINMLVTYSFTVCY) are extracellular. Residues 1395-1415 (IFFISFKILEGLVMCIIILSI) form a helical membrane-spanning segment. The Cytoplasmic segment spans residues 1416–1457 (AIWVYYHKNNNLNAMCTDFCDNPYTSLDNLEYINISCICKQQ). Residues 1458–1478 (IFTFLICTLSFTLICLFMKYY) traverse the membrane as a helical segment. The Extracellular segment spans residues 1479–1500 (EIYYLKKKFLTRYKQKVNLGKQ). The helical transmembrane segment at 1501-1521 (IEILHTMLPSFLVEYLLVSDP) threads the bilayer. The Cytoplasmic portion of the chain corresponds to 1522–2563 (KADGIMVGKN…EIINIDLTKK (1042 aa)). The 156-residue stretch at 1541–1696 (SVIFCDIDDF…DTVNTASRMK (156 aa)) folds into the Guanylate cyclase 1 domain. Residues 2463–2476 (TMSNSKSGQTNITT) show a composition bias toward polar residues. The disordered stretch occupies residues 2463-2491 (TMSNSKSGQTNITTDNKKSQIKKNGDVNK). Basic and acidic residues predominate over residues 2477-2488 (DNKKSQIKKNGD). A helical transmembrane segment spans residues 2564 to 2584 (LIIIFVISELILSLCNVIELS). At 2585–2594 (YYENKETPND) the chain is on the extracellular side. A helical transmembrane segment spans residues 2595-2615 (FIVIIWLIRSIYLFTITFIWL). Over 2616-2634 (LLKTKLKEYKDNSSKMMWT) the chain is Cytoplasmic. The chain crosses the membrane as a helical span at residues 2635–2655 (TFILNIFLSSWGIIMIDLACI). Residues 2656-2667 (HYSNLVGNSRER) lie on the Extracellular side of the membrane. The chain crosses the membrane as a helical span at residues 2668–2688 (SIFFMKDATELIISMQLIFVK). Residues 2689-2695 (NMLFKHK) lie on the Cytoplasmic side of the membrane. The helical transmembrane segment at 2696 to 2716 (FFFFVFFFVFLMYSFFKLFVI) threads the bilayer. The Extracellular portion of the chain corresponds to 2717–2722 (HVCELR). The chain crosses the membrane as a helical span at residues 2723-2743 (ICCSILLILSINILYFWYSEY). Topologically, residues 2744-3004 (LDRTQYIIKR…KLREQNKVKG (261 aa)) are cytoplasmic. The Guanylate cyclase 2 domain maps to 2793–2927 (AFLFADIVGF…LDVLIANHIE (135 aa)). Mg(2+) is bound by residues Asp2798, Ile2799, and Asp2842.

In the N-terminal section; belongs to the cation transport ATPase (P-type) (TC 3.A.3) family. Type IV subfamily. This sequence in the C-terminal section; belongs to the adenylyl cyclase class-4/guanylyl cyclase family. The cofactor is Mg(2+). It depends on Mn(2+) as a cofactor.

It is found in the membrane. The enzyme catalyses GTP = 3',5'-cyclic GMP + diphosphate. In terms of biological role, catalyzes the synthesis of the second messenger cGMP from GTP. Probably by regulating cGMP production, required for ookinete gliding motility, which is necessary for the ookinete to traverse the midgut epithelium of the mosquito. The polypeptide is Guanylate cyclase beta (Plasmodium berghei (strain Anka)).